A 26-amino-acid chain; its full sequence is VIDDLKKVAKKVRRELLCKKHHKKLN.

Expressed by the skin glands.

It is found in the secreted. In terms of biological role, antimicrobial peptide. Active against the Gram-positive bacteria S.aureus FDA209P (MIC=35.5 ug/ml) and B.subtilis ATCC 6633 (MIC&gt;64 ug/ml), but not active against the Gram-negative bacterium E.coli or the fungus C.albicans. This Sylvirana guentheri (Gunther's frog) protein is Guentherin.